Consider the following 377-residue polypeptide: Lipoyl synthase, mitochondrial (377 aa).

[4Fe-4S] cluster-binding residues include Cys103, Cys108, Cys114, Cys134, Cys138, Cys141, and Ser349. The 220-residue stretch at 119 to 338 (EHGTQTATIM…EERGNELGFL (220 aa)) folds into the Radical SAM core domain.

Belongs to the radical SAM superfamily. Lipoyl synthase family. The cofactor is [4Fe-4S] cluster.

It is found in the mitochondrion. The enzyme catalyses [[Fe-S] cluster scaffold protein carrying a second [4Fe-4S](2+) cluster] + N(6)-octanoyl-L-lysyl-[protein] + 2 oxidized [2Fe-2S]-[ferredoxin] + 2 S-adenosyl-L-methionine + 4 H(+) = [[Fe-S] cluster scaffold protein] + N(6)-[(R)-dihydrolipoyl]-L-lysyl-[protein] + 4 Fe(3+) + 2 hydrogen sulfide + 2 5'-deoxyadenosine + 2 L-methionine + 2 reduced [2Fe-2S]-[ferredoxin]. It functions in the pathway protein modification; protein lipoylation via endogenous pathway; protein N(6)-(lipoyl)lysine from octanoyl-[acyl-carrier-protein]: step 2/2. Catalyzes the radical-mediated insertion of two sulfur atoms into the C-6 and C-8 positions of the octanoyl moiety bound to the lipoyl domains of lipoate-dependent enzymes, thereby converting the octanoylated domains into lipoylated derivatives. The protein is Lipoyl synthase, mitochondrial of Drosophila melanogaster (Fruit fly).